The following is a 201-amino-acid chain: dCTP deaminase, dUMP-forming (201 aa).

Residues 101 to 106 (KSSLGR), aspartate 119, 127 to 129 (TLE), glutamine 148, tyrosine 162, and glutamine 174 contribute to the dCTP site. Glutamate 129 (proton donor/acceptor) is an active-site residue.

This sequence belongs to the dCTP deaminase family. In terms of assembly, homotrimer.

The catalysed reaction is dCTP + 2 H2O = dUMP + NH4(+) + diphosphate. It participates in pyrimidine metabolism; dUMP biosynthesis; dUMP from dCTP: step 1/1. Bifunctional enzyme that catalyzes both the deamination of dCTP to dUTP and the hydrolysis of dUTP to dUMP without releasing the toxic dUTP intermediate. This is dCTP deaminase, dUMP-forming from Parafrankia sp. (strain EAN1pec).